The primary structure comprises 432 residues: MSEKLPYKVADISLAAWGRKALDLAENEMPGLMRMREMYSASKPLKGARIAGCLHMTVETAVLIETLVALGAEVRWSSCNIFSTQDHAAAAIAKAGIPVYAWKGETDEEYLWCIEQTLYFKDGPLNMILDDGGDLTNLVHTKYPELLSGIRGISEETTTGVHNLYKMKANGILKVPAINVNDSVTKSKFDNLYGCRESLIDGIKRATDVMIAGKVAVVAGYGDVGKGCAQALRGFGARVIITEIDPINALQAAMEGYEVTTMDEACQEGNIFVTTTGCIDIILGRHFEQMKDDAIVCNIGHFDVEIDVKWLNENAVEKVNIKPQVDRYLLKNGHRIILLAEGRLVNLGCAMGHPSFVMSNSFTNQVLAQIELWTHPDKYPVGVHFLPKKLDEAVAEAHLGKLNVKLTKLTEKQAQYLGMSREGPFKPDHYRY.

Ser-2 is subject to N-acetylserine. The substrate site is built by Thr-57, Asp-131, and Glu-156. The residue at position 183 (Ser-183) is a Phosphoserine. Residues 183 to 350 (SVTKSKFDNL…EGRLVNLGCA (168 aa)) form an NAD binding region. Positions 186 and 190 each coordinate substrate. Position 186 is an N6-(2-hydroxyisobutyryl)lysine (Lys-186). At Tyr-193 the chain carries Phosphotyrosine.

It belongs to the adenosylhomocysteinase family. As to quaternary structure, homotetramer. Interaction with AHCYL1. NAD(+) is required as a cofactor.

The protein localises to the cytoplasm. It localises to the melanosome. The protein resides in the nucleus. Its subcellular location is the endoplasmic reticulum. The catalysed reaction is S-adenosyl-L-homocysteine + H2O = L-homocysteine + adenosine. It functions in the pathway amino-acid biosynthesis; L-homocysteine biosynthesis; L-homocysteine from S-adenosyl-L-homocysteine: step 1/1. In terms of biological role, catalyzes the hydrolysis of S-adenosyl-L-homocysteine to form adenosine and homocysteine. Binds copper ions. The protein is Adenosylhomocysteinase (AHCY) of Sus scrofa (Pig).